Here is a 239-residue protein sequence, read N- to C-terminus: MEIRWLGHSAFEIITDEGLNILIDPFISNNPACQIPVEEFNPDIILVTHGHSDHLGDAMELSNKNNVPVAAIHEISLFLSKQGINNIGVNIGGSFIYRGVKFTMLDAKHSSVLDIVEEPLPAGDAASFLITLEDGTKLFHAGDTGLFGDMKTIIGEIYKPDIALLPIGDKFTMGPFEAALATRWIDSKVAIPMHYNTFPPIEQDPSIYANFVSQLNPNIDVVILNPGEYFEYNPENYQD.

It belongs to the UPF0173 family.

The protein is UPF0173 metal-dependent hydrolase Msm_0779 of Methanobrevibacter smithii (strain ATCC 35061 / DSM 861 / OCM 144 / PS).